The following is a 221-amino-acid chain: Ribosomal RNA small subunit methyltransferase Nep1 (221 aa).

Residues Gly-174, Gly-179, and 196 to 201 (IGDETM) each bind S-adenosyl-L-methionine.

It belongs to the class IV-like SAM-binding methyltransferase superfamily. RNA methyltransferase NEP1 family. In terms of assembly, homodimer.

It carries out the reaction a pseudouridine in rRNA + S-adenosyl-L-methionine = an N(1)-methylpseudouridine in rRNA + S-adenosyl-L-homocysteine + H(+). Functionally, methyltransferase involved in ribosomal biogenesis. Specifically catalyzes the N1-methylation of the pseudouridine corresponding to position 914 in M.jannaschii 16S rRNA. This Pyrobaculum islandicum (strain DSM 4184 / JCM 9189 / GEO3) protein is Ribosomal RNA small subunit methyltransferase Nep1.